The sequence spans 255 residues: Indole-3-glycerol phosphate synthase (255 aa).

Belongs to the TrpC family.

The enzyme catalyses 1-(2-carboxyphenylamino)-1-deoxy-D-ribulose 5-phosphate + H(+) = (1S,2R)-1-C-(indol-3-yl)glycerol 3-phosphate + CO2 + H2O. It participates in amino-acid biosynthesis; L-tryptophan biosynthesis; L-tryptophan from chorismate: step 4/5. This Streptococcus pneumoniae (strain 70585) protein is Indole-3-glycerol phosphate synthase.